A 279-amino-acid polypeptide reads, in one-letter code: Large ribosomal subunit protein uL2 (279 aa).

Disordered regions lie at residues 32-58 and 223-279; these read SLLTPLPKKGGRNAHGRITARHQGGGH and GVAM…RKRG. Composition is skewed to basic residues over residues 40–58 and 269–279; these read KGGRNAHGRITARHQGGGH and VRRRYATRKRG.

It belongs to the universal ribosomal protein uL2 family. As to quaternary structure, part of the 50S ribosomal subunit. Forms a bridge to the 30S subunit in the 70S ribosome.

One of the primary rRNA binding proteins. Required for association of the 30S and 50S subunits to form the 70S ribosome, for tRNA binding and peptide bond formation. It has been suggested to have peptidyltransferase activity; this is somewhat controversial. Makes several contacts with the 16S rRNA in the 70S ribosome. The protein is Large ribosomal subunit protein uL2 of Salinispora tropica (strain ATCC BAA-916 / DSM 44818 / JCM 13857 / NBRC 105044 / CNB-440).